A 166-amino-acid chain; its full sequence is Pyruvoyl-dependent arginine decarboxylase (166 aa).

Residue S45 is modified to Pyruvic acid (Ser).

Belongs to the PdaD family. It depends on pyruvate as a cofactor.

It catalyses the reaction L-arginine + H(+) = agmatine + CO2. This chain is Pyruvoyl-dependent arginine decarboxylase, found in Methanocella arvoryzae (strain DSM 22066 / NBRC 105507 / MRE50).